Reading from the N-terminus, the 550-residue chain is tRNA modification GTPase MnmE (550 aa).

(6S)-5-formyl-5,6,7,8-tetrahydrofolate contacts are provided by arginine 20, glutamate 78, and arginine 116. The region spanning 212-478 is the TrmE-type G domain; it reads GFSVVIVGKP…LLDKIFDIIS (267 aa). Asparagine 222 lines the K(+) pocket. Residues 222-227, 241-247, and 266-269 contribute to the GTP site; these read NVGKST, TDIPGTT, and DTAG. A Mg(2+)-binding site is contributed by serine 226. K(+)-binding residues include threonine 241, isoleucine 243, and threonine 246. Threonine 247 provides a ligand contact to Mg(2+). Residue lysine 550 participates in (6S)-5-formyl-5,6,7,8-tetrahydrofolate binding.

Belongs to the TRAFAC class TrmE-Era-EngA-EngB-Septin-like GTPase superfamily. TrmE GTPase family. As to quaternary structure, homodimer. Heterotetramer of two MnmE and two MnmG subunits. It depends on K(+) as a cofactor.

It localises to the cytoplasm. Exhibits a very high intrinsic GTPase hydrolysis rate. Involved in the addition of a carboxymethylaminomethyl (cmnm) group at the wobble position (U34) of certain tRNAs, forming tRNA-cmnm(5)s(2)U34. The protein is tRNA modification GTPase MnmE of Neorickettsia sennetsu (strain ATCC VR-367 / Miyayama) (Ehrlichia sennetsu).